A 235-amino-acid polypeptide reads, in one-letter code: MRDLLQYIACFFAFFSAGFLIVATWTDCWMVNADDSLEVSTKCRGLWWECVTNAFDGIRTCDEYDSILAEHPLKLVVTRALMITADILAGFGFLTLLLGLDCVKFLPDEPYIKVRICFVAGATLLIAGTPGIIGSVWYAVDVYVERSTLVLHNIFLGIQYKFGWSCWLGMAGSLGCFLAGAVLTCCLYLFKDVGPERNYPYSLRKAYSAAGVSMAKSYSAPRTETAKMYAVDTRV.

Residues 1–3 (MRD) are Cytoplasmic-facing. Residues 4 to 24 (LLQYIACFFAFFSAGFLIVAT) form a helical membrane-spanning segment. Residues 25 to 79 (WTDCWMVNADDSLEVSTKCRGLWWECVTNAFDGIRTCDEYDSILAEHPLKLVVTR) are Extracellular-facing. The helical transmembrane segment at 80 to 100 (ALMITADILAGFGFLTLLLGL) threads the bilayer. Over 101 to 115 (DCVKFLPDEPYIKVR) the chain is Cytoplasmic. The helical transmembrane segment at 116 to 136 (ICFVAGATLLIAGTPGIIGSV) threads the bilayer. Residues 137 to 169 (WYAVDVYVERSTLVLHNIFLGIQYKFGWSCWLG) lie on the Extracellular side of the membrane. A helical membrane pass occupies residues 170–190 (MAGSLGCFLAGAVLTCCLYLF). At 191 to 235 (KDVGPERNYPYSLRKAYSAAGVSMAKSYSAPRTETAKMYAVDTRV) the chain is on the cytoplasmic side. Residues 233-235 (TRV) carry the Interaction with TJP1 motif.

This sequence belongs to the claudin family. As to quaternary structure, can form heteropolymeric tight junction strands with other claudins. Interacts with CLDN19. Interacts (via PDZ-binding motif TRV) with TJP1 (via PDZ domain). Cannot form tight junction strands on its own. In terms of tissue distribution, kidney-specific, including the thick ascending limb of Henle (TAL).

It localises to the cell junction. The protein localises to the tight junction. Its subcellular location is the cell membrane. It carries out the reaction Mg(2+)(in) = Mg(2+)(out). The catalysed reaction is Ca(2+)(in) = Ca(2+)(out). It catalyses the reaction Na(+)(in) = Na(+)(out). The enzyme catalyses K(+)(in) = K(+)(out). It carries out the reaction Rb(+)(in) = Rb(+)(out). The catalysed reaction is Cs(+)(in) = Cs(+)(out). It catalyses the reaction Li(+)(in) = Li(+)(out). Forms paracellular channels: coassembles with CLDN19 into tight junction strands with cation-selective channels through the strands, conveying epithelial permeability in a process known as paracellular tight junction permeability. Involved in the maintenance of ion gradients along the nephron. In the thick ascending limb (TAL) of Henle's loop, facilitates sodium paracellular permeability from the interstitial compartment to the lumen, contributing to the lumen-positive transepithelial potential that drives paracellular magnesium and calcium reabsorption. The polypeptide is Claudin-16 (Homo sapiens (Human)).